A 156-amino-acid chain; its full sequence is 6,7-dimethyl-8-ribityllumazine synthase (156 aa).

Residues Phe-22, 57–59 (AVE), and 81–83 (SVI) each bind 5-amino-6-(D-ribitylamino)uracil. Residue 86–87 (GT) participates in (2S)-2-hydroxy-3-oxobutyl phosphate binding. His-89 (proton donor) is an active-site residue. Phe-114 provides a ligand contact to 5-amino-6-(D-ribitylamino)uracil. (2S)-2-hydroxy-3-oxobutyl phosphate is bound at residue Arg-128.

Belongs to the DMRL synthase family. Forms an icosahedral capsid composed of 60 subunits, arranged as a dodecamer of pentamers.

The enzyme catalyses (2S)-2-hydroxy-3-oxobutyl phosphate + 5-amino-6-(D-ribitylamino)uracil = 6,7-dimethyl-8-(1-D-ribityl)lumazine + phosphate + 2 H2O + H(+). It participates in cofactor biosynthesis; riboflavin biosynthesis; riboflavin from 2-hydroxy-3-oxobutyl phosphate and 5-amino-6-(D-ribitylamino)uracil: step 1/2. Functionally, catalyzes the formation of 6,7-dimethyl-8-ribityllumazine by condensation of 5-amino-6-(D-ribitylamino)uracil with 3,4-dihydroxy-2-butanone 4-phosphate. This is the penultimate step in the biosynthesis of riboflavin. In Vibrio vulnificus (strain CMCP6), this protein is 6,7-dimethyl-8-ribityllumazine synthase.